Here is a 457-residue protein sequence, read N- to C-terminus: ATP synthase subunit beta (457 aa).

ATP is bound at residue 147–154; sequence GGAGVGKT.

This sequence belongs to the ATPase alpha/beta chains family. In terms of assembly, F-type ATPases have 2 components, CF(1) - the catalytic core - and CF(0) - the membrane proton channel. CF(1) has five subunits: alpha(3), beta(3), gamma(1), delta(1), epsilon(1). CF(0) has three main subunits: a(1), b(2) and c(9-12). The alpha and beta chains form an alternating ring which encloses part of the gamma chain. CF(1) is attached to CF(0) by a central stalk formed by the gamma and epsilon chains, while a peripheral stalk is formed by the delta and b chains.

The protein localises to the cell inner membrane. It catalyses the reaction ATP + H2O + 4 H(+)(in) = ADP + phosphate + 5 H(+)(out). Produces ATP from ADP in the presence of a proton gradient across the membrane. The catalytic sites are hosted primarily by the beta subunits. This chain is ATP synthase subunit beta, found in Pasteurella multocida (strain Pm70).